We begin with the raw amino-acid sequence, 349 residues long: Sphingomyelinase D (349 aa).

The signal sequence occupies residues 1–18 (MLLSSLISLALLSSQVVA). Residue His52 is part of the active site. Residues Glu72, Asp74, and Asp123 each contribute to the Mg(2+) site. The short motif at 310-317 (ATNDNNPW) is the SMD-tail element.

Belongs to the sphingomyelinase D/phospholipase D family. The cofactor is Mg(2+).

The protein localises to the secreted. It catalyses the reaction a sphingomyelin + H2O = an N-acylsphing-4-enine 1-phosphate + choline + H(+). Its function is as follows. Catalyzes the hydrolysis of sphingomyelin. Sphingomyelinases D are produced by some spider in their venoms, but also by arthropods such as ticks, or pathogenic bacteria and fungi. They might play a role in pathogenicity through different mechanisms, such as membrane destabilization and host cell penetration, but also pulmonary inflammation and cutaneous lesions. The polypeptide is Sphingomyelinase D (Uncinocarpus reesii (strain UAMH 1704)).